A 332-amino-acid polypeptide reads, in one-letter code: Phosphate acyltransferase (332 aa).

This sequence belongs to the PlsX family. Homodimer. Probably interacts with PlsY.

It is found in the cytoplasm. It catalyses the reaction a fatty acyl-[ACP] + phosphate = an acyl phosphate + holo-[ACP]. It functions in the pathway lipid metabolism; phospholipid metabolism. In terms of biological role, catalyzes the reversible formation of acyl-phosphate (acyl-PO(4)) from acyl-[acyl-carrier-protein] (acyl-ACP). This enzyme utilizes acyl-ACP as fatty acyl donor, but not acyl-CoA. The chain is Phosphate acyltransferase from Caldanaerobacter subterraneus subsp. tengcongensis (strain DSM 15242 / JCM 11007 / NBRC 100824 / MB4) (Thermoanaerobacter tengcongensis).